A 493-amino-acid chain; its full sequence is Glycerol kinase (493 aa).

An ADP-binding site is contributed by threonine 12. Threonine 12, threonine 13, and serine 14 together coordinate ATP. A sn-glycerol 3-phosphate-binding site is contributed by threonine 12. Arginine 16 is a binding site for ADP. Sn-glycerol 3-phosphate contacts are provided by arginine 82, glutamate 83, tyrosine 132, and aspartate 239. Glycerol is bound by residues arginine 82, glutamate 83, tyrosine 132, aspartate 239, and glutamine 240. Residues threonine 261 and glycine 303 each coordinate ADP. ATP-binding residues include threonine 261, glycine 303, glutamine 307, and glycine 402. Positions 402 and 406 each coordinate ADP.

Belongs to the FGGY kinase family.

The enzyme catalyses glycerol + ATP = sn-glycerol 3-phosphate + ADP + H(+). Its pathway is polyol metabolism; glycerol degradation via glycerol kinase pathway; sn-glycerol 3-phosphate from glycerol: step 1/1. Functionally, key enzyme in the regulation of glycerol uptake and metabolism. Catalyzes the phosphorylation of glycerol to yield sn-glycerol 3-phosphate. The sequence is that of Glycerol kinase from Thermococcus onnurineus (strain NA1).